Here is a 29-residue protein sequence, read N- to C-terminus: Vodo peptide N (29 aa).

The cyclopeptide (Gly-Asn) cross-link spans 1–29 (GLPVCGETCTLGKCYTAGCSCSWPVCYRN). Intrachain disulfides connect C5–C19, C9–C21, and C14–C26.

This is a cyclic peptide.

Its function is as follows. Probably participates in a plant defense mechanism. The protein is Vodo peptide N of Viola odorata (Sweet violet).